The sequence spans 177 residues: RNA pyrophosphohydrolase (177 aa).

The region spanning 6-149 (GYRPNVGIVI…KRDVYRRVMK (144 aa)) is the Nudix hydrolase domain. The short motif at 38 to 59 (GGINPGESAEQAMYRELFEEVG) is the Nudix box element.

It belongs to the Nudix hydrolase family. RppH subfamily. A divalent metal cation is required as a cofactor.

In terms of biological role, accelerates the degradation of transcripts by removing pyrophosphate from the 5'-end of triphosphorylated RNA, leading to a more labile monophosphorylated state that can stimulate subsequent ribonuclease cleavage. This Pectobacterium carotovorum subsp. carotovorum (strain PC1) protein is RNA pyrophosphohydrolase.